The chain runs to 1059 residues: Isoleucine--tRNA ligase (1059 aa).

The short motif at 59–69 is the 'HIGH' region element; sequence PFANGLPHYGH. The 'KMSKS' region motif lies at 637 to 641; the sequence is KMSKS. K640 contributes to the ATP binding site.

It belongs to the class-I aminoacyl-tRNA synthetase family. IleS type 2 subfamily. In terms of assembly, monomer. Zn(2+) serves as cofactor.

It is found in the cytoplasm. The enzyme catalyses tRNA(Ile) + L-isoleucine + ATP = L-isoleucyl-tRNA(Ile) + AMP + diphosphate. In terms of biological role, catalyzes the attachment of isoleucine to tRNA(Ile). As IleRS can inadvertently accommodate and process structurally similar amino acids such as valine, to avoid such errors it has two additional distinct tRNA(Ile)-dependent editing activities. One activity is designated as 'pretransfer' editing and involves the hydrolysis of activated Val-AMP. The other activity is designated 'posttransfer' editing and involves deacylation of mischarged Val-tRNA(Ile). This is Isoleucine--tRNA ligase from Mycobacterium leprae (strain TN).